We begin with the raw amino-acid sequence, 468 residues long: Keratin, type I cytoskeletal 26 (468 aa).

The tract at residues 1-82 is head; it reads MSFRLSGGSR…GNEHSLLSGN (82 aa). The segment at 83 to 118 is coil 1A; sequence EKVTMQNLNDRLASYLDHVHALEEANADLEQKIKGW. In terms of domain architecture, IF rod spans 83–398; that stretch reads EKVTMQNLND…NLLDGEERKS (316 aa). The tract at residues 119-140 is linker 1; that stretch reads YEKCEPGSSREHDHDYSRYFSV. The interval 141 to 232 is coil 1B; that stretch reads IEDLKRQIIS…KSHEEEMEVL (92 aa). The tract at residues 233–255 is linker 12; that stretch reads QYTAGGNVNVEMNATPGVDLTVL. A coil 2 region spans residues 256-394; sequence LNNMRAEYED…DIYCNLLDGE (139 aa). A tail region spans residues 395–465; that stretch reads ERKSKSTCYK…NITVEQRVPS (71 aa).

It belongs to the intermediate filament family. As to quaternary structure, heterotetramer of two type I and two type II keratins. In terms of tissue distribution, strongly expressed in skin and scalp, and weak expression observed in thymus and tongue. In the hair follicle, expression is restricted to the mid- to upper inner root sheath cuticle, being present slightly above the apex of the dermal papilla (at protein level).

The polypeptide is Keratin, type I cytoskeletal 26 (Homo sapiens (Human)).